The sequence spans 148 residues: MITLPKISLIGSNIAKEGLEFVFAGPLAACSDCRVKNVCFNLEQGHRYRVTKVREQVNPCIIFNGDKVNTVEVEELEDYVNVQESKRIQEGAIITLKSMNCDYITCPNIEKCNLYYFKPDSKVMVKSIGKEIKCPKGYKMKQVAITYK.

The protein belongs to the UPF0179 family.

The polypeptide is UPF0179 protein Ta1159 (Thermoplasma acidophilum (strain ATCC 25905 / DSM 1728 / JCM 9062 / NBRC 15155 / AMRC-C165)).